Here is a 1163-residue protein sequence, read N- to C-terminus: MPRFLKYILGLFLISISAFGQNLVPEVTELESGFNSPPNQAKARTWWHWISGNVSKSGITKDLEAMKAVGIQEAQLFNVDLGFPAGPVDYLSEDWLDLFHFSALEAKRIGLELTFHNTAGWSSSGGPWISPEYAMQTVVYSEIIVKGGKAIKKQLPQPETKLNFYKDIAVLAFPKPKQTMKIDDLDFKSLSGRIRNHLLPDTKIIPSEAVIQKQEIINLTAHLNDAGILEWKVPKGEWVILRLGHTPTGKKNHPAPKGGHGLEVDKMSTKAVDVYWEGGIQPILNKLGDLVGTTVNNCLIDSYEVGTANWTAGFDAEFETLRGYSLVSYLPTLAGYYVESGEITERFLWDFRRTIGDLMAKNYYAHFRDLCHKNGLKFSVEPYWGPFDNMQVGATGDIVMCEFWSGGYPFFDSPKFVSSIAHLNGSSIVGAESFTGIGGWDEHPAELKSIGDRAWAEGITRFIFHTYVHQPWDVAPGLALSYHGTDFNRLNTWWRQGKAFMDYIARSQFMLQQGKNVADVLVFTGESSPNTAFLLPEIKQLGYDYDLIGSNKLSDLFVKNGKICTPVGGQYDVLMLPESDWIKPETLHKIEDLVKDGAKVIGSKPKKSPSLEHYSTCDAEVKRLSDFLWGKGLVKEISIVDFLKGNNLLADFKIESDDVSDISFIHRKTDEADIYFIANARKESREIKVRFRVSNKQPEIWQAESGTIKKPAVWQNHADGTTSLPLQLGMEEAVFVVFKNASKEKSQLVSAKMELENPKSEPLSNLQIIKAEYGTFLQEGLVDITDKVAAEVKDNQLHIQASRAFCDCDPAMGYIKEFRMEYQIGEDIKTISAQEKEYVNINAGDKKLTVLKAVFGKFKPETKGVPKHYPVHDVTEKIKQEIASGNLVIPVNNQLIGGKTPEGDNTTIKITFTTDGEEQTLFVPKGRPLNLSKDRSKPEIVLNDGETQWITPYPGTLSYKNLSGKVMATTVKSVPQPIMLAGTWDVEFPSDLVTINKVRFDELKSWSAVENEGIKYFSGTASYHKTFQVSKKLLKSNNKLELDLGSVAVIAEVILNGKPVGTLWKAPFRLDVTNDVKTGENKLEVKVTNLWPNRLIGDEKLPLDFERKGPKIKSVPDWLLNNTKRPSERTTFPAWKHWDKEDELLSSGLLGPVKINVLVEKSL.

Positions 1 to 20 (MPRFLKYILGLFLISISAFG) are cleaved as a signal peptide.

This sequence belongs to the glycosyl hydrolase 2 family.

It localises to the periplasm. It carries out the reaction a beta-D-glucuronoside + H2O = D-glucuronate + an alcohol. Functionally, glycoside hydrolase involved in ulvan degradation. Ulvan is the main polysaccharide component of the Ulvales (green seaweed) cell wall. It is composed of disaccharide building blocks comprising 3-sulfated rhamnose (Rha3S) linked to D-glucuronic acid (GlcA), L-iduronic acid (IduA), or D-xylose (Xyl). The polypeptide is Putative beta-glucuronidase (Formosa agariphila (strain DSM 15362 / KCTC 12365 / LMG 23005 / KMM 3901 / M-2Alg 35-1)).